Here is a 196-residue protein sequence, read N- to C-terminus: Serine/arginine-rich splicing factor RSZ22A (196 aa).

Positions 2 to 71 constitute an RRM domain; sequence SRVYVGNLDP…NGWRVEQSHN (70 aa). The residue at position 48 (S48) is a Phosphoserine. The span at 58–70 shows a compositional bias: basic and acidic residues; the sequence is VDGKNGWRVEQSH. The tract at residues 58 to 196 is disordered; the sequence is VDGKNGWRVE…GLKDVRRSRS (139 aa). The segment covering 72–87 has biased composition (gly residues); the sequence is RGGGGGRGGGRGGGDG. A compositionally biased stretch (basic and acidic residues) spans 88-100; that stretch reads GRGRGGSDLKCYE. The segment at 96–113 adopts a CCHC-type zinc-finger fold; that stretch reads LKCYECGESGHFARECRS. The segment covering 119-135 has biased composition (basic residues); that stretch reads GRRRSRSRSRSPPRYRK. A phosphoserine mark is found at S136, S144, S146, S151, S159, S170, and S196. Positions 139 to 149 are enriched in low complexity; that stretch reads YGGRRSYSPRA.

It belongs to the splicing factor SR family. RSZ subfamily. In terms of assembly, component of the spliceosome. Extensively phosphorylated on serine residues in the RS domain.

Its subcellular location is the nucleus. Its function is as follows. Probably involved in intron recognition and spliceosome assembly. This Arabidopsis thaliana (Mouse-ear cress) protein is Serine/arginine-rich splicing factor RSZ22A (RSZ22A).